Reading from the N-terminus, the 217-residue chain is Membrane-associated progesterone receptor component 2 (217 aa).

Residue S15 is glycosylated (O-linked (Xyl...) (chondroitin sulfate) serine). A helical transmembrane segment spans residues 40–62 (ALLATGGEMLLNVALVALVLLGA). A phosphoserine mark is found at S84, S98, and S202. A Cytochrome b5 heme-binding domain is found at 96–195 (DFSLEQLRQY…EKYDYVGRLL (100 aa)). Residues 196-217 (KPGEEPSEYTDEEDTKDHSKQD) are disordered. A compositionally biased stretch (acidic residues) spans 200–209 (EPSEYTDEED). A Phosphotyrosine modification is found at Y204. T205 bears the Phosphothreonine mark.

It belongs to the cytochrome b5 family. MAPR subfamily. As to quaternary structure, interacts with PGRMC1. Interacts with AAAS.

Its subcellular location is the membrane. The protein resides in the nucleus envelope. It localises to the endoplasmic reticulum. It is found in the secreted. Required for the maintenance of uterine histoarchitecture and normal female reproductive lifespan. May serve as a universal non-classical progesterone receptor in the uterus. Intracellular heme chaperone required for delivery of labile, or signaling heme, to the nucleus. Plays a role in adipocyte function and systemic glucose homeostasis. In brown fat, which has a high demand for heme, delivery of labile heme in the nucleus regulates the activity of heme-responsive transcriptional repressors such as NR1D1 and BACH1. The polypeptide is Membrane-associated progesterone receptor component 2 (Rattus norvegicus (Rat)).